The sequence spans 173 residues: Small ribosomal subunit protein uS5 (173 aa).

Residues 17-80 form the S5 DRBM domain; the sequence is WQERVIQIRR…SDAKKHVVDV (64 aa).

This sequence belongs to the universal ribosomal protein uS5 family. As to quaternary structure, part of the 30S ribosomal subunit. Contacts proteins S4 and S8.

In terms of biological role, with S4 and S12 plays an important role in translational accuracy. Functionally, located at the back of the 30S subunit body where it stabilizes the conformation of the head with respect to the body. The chain is Small ribosomal subunit protein uS5 from Picosynechococcus sp. (strain ATCC 27264 / PCC 7002 / PR-6) (Agmenellum quadruplicatum).